The primary structure comprises 448 residues: Trigger factor (448 aa).

In terms of domain architecture, PPIase FKBP-type spans 162–243 (GDFVQIDLNA…VRTVKEKELP (82 aa)).

Belongs to the FKBP-type PPIase family. Tig subfamily.

Its subcellular location is the cytoplasm. It carries out the reaction [protein]-peptidylproline (omega=180) = [protein]-peptidylproline (omega=0). Functionally, involved in protein export. Acts as a chaperone by maintaining the newly synthesized protein in an open conformation. Functions as a peptidyl-prolyl cis-trans isomerase. The chain is Trigger factor from Salinispora arenicola (strain CNS-205).